Reading from the N-terminus, the 115-residue chain is Putative UPF0377 protein YHL045W (115 aa).

Residues 10–30 (ACIFIDSVCEGIVFWGLCLFV) traverse the membrane as a helical segment.

The protein belongs to the UPF0377 family.

It is found in the membrane. This chain is Putative UPF0377 protein YHL045W, found in Saccharomyces cerevisiae (strain ATCC 204508 / S288c) (Baker's yeast).